A 394-amino-acid polypeptide reads, in one-letter code: Elongation factor Tu (394 aa).

Residues 10–204 form the tr-type G domain; sequence KPHVNIGTIG…AVDEYIPTPD (195 aa). The interval 19 to 26 is G1; sequence GHIDHGKT. 19–26 is a binding site for GTP; sequence GHIDHGKT. Position 26 (T26) interacts with Mg(2+). Residues 60 to 64 form a G2 region; sequence GITIN. Residues 81 to 84 form a G3 region; sequence DCPG. Residues 81-85 and 136-139 contribute to the GTP site; these read DCPGH and NKCD. The segment at 136–139 is G4; it reads NKCD. The tract at residues 174 to 176 is G5; that stretch reads SAL.

This sequence belongs to the TRAFAC class translation factor GTPase superfamily. Classic translation factor GTPase family. EF-Tu/EF-1A subfamily. As to quaternary structure, monomer.

The protein resides in the cytoplasm. It carries out the reaction GTP + H2O = GDP + phosphate + H(+). Functionally, GTP hydrolase that promotes the GTP-dependent binding of aminoacyl-tRNA to the A-site of ribosomes during protein biosynthesis. In Mycoplasmoides gallisepticum (strain R(low / passage 15 / clone 2)) (Mycoplasma gallisepticum), this protein is Elongation factor Tu.